Consider the following 299-residue polypeptide: RGGGRGGPRGGGRGRGPGRGRGFNQESADDENAFGSNNGFSGRYRVQEDGESGKLSERRGGYGGPRGGFHGGRRGGFNNGDAAEGEGERPRRVFDRRSGTGRGNEYIKREGSGRGNWGTPADDIAQETEVPVNDGEKIVEAEKEAGQEEAEDTNKDSTAAEPEEKEPEEKEMTLEEYEKLMEEKRKALLALKPEERKVNLDKELESMQLLSNKKNDDEIFIKLGSEKEKRKEAVEKARKTQSINEFLKPAEGENYSRRGGRGRGPGRGRGGFGGGVGGNKSFSAPSIEDVGQFPSLVAK.

Gly residues predominate over residues 1 to 21 (RGGGRGGPRGGGRGRGPGRGR). 2 disordered regions span residues 1-173 (RGGG…KEMT) and 232-299 (EAVE…LVAK). The segment covering 45–60 (RVQEDGESGKLSERRG) has biased composition (basic and acidic residues). Residues 61–78 (GYGGPRGGFHGGRRGGFN) are compositionally biased toward gly residues. 2 stretches are compositionally biased toward basic and acidic residues: residues 86–98 (EGERPRRVFDRRS) and 134–146 (DGEKIVEAEKEAG). The short motif at 88–98 (ERPRRVFDRRS) is the Arginine-rich RNA-binding motif E-R-P-R-R-X-[F/Y]-[E/D]-R-R-S element. Residues 267–278 (RGRGGFGGGVGG) are compositionally biased toward gly residues.

It belongs to the SERBP1-HABP4 family. As to expression, expressed in seedlings but not in roots.

Its subcellular location is the nucleus. The protein resides in the cytoplasm. It localises to the perinuclear region. In terms of biological role, ribosome-binding protein that acts as a regulator of mRNA translation by promoting ribosome inactivation. Binds RNA. The polypeptide is RGG repeats nuclear RNA binding protein A (Nicotiana tabacum (Common tobacco)).